Consider the following 389-residue polypeptide: Phenylpropanoylacetyl-CoA synthase (389 aa).

Residue C163 is part of the active site.

Belongs to the thiolase-like superfamily. Chalcone/stilbene synthases family. Homodimer. Expressed in both the leaf and rhizome, with higher expression in the rhizome.

It carries out the reaction (E)-feruloyl-CoA + malonyl-CoA + H(+) = (E)-feruloylacetyl-CoA + CO2 + CoA. The catalysed reaction is 4-coumaroyl-CoA + malonyl-CoA + H(+) = (4-coumaroyl)acetyl-CoA + CO2 + CoA. It functions in the pathway secondary metabolite biosynthesis; flavonoid biosynthesis. Functionally, catalyzes the formation of feruloyldiketide-CoA by condensing feruloyl-CoA and malonyl-CoA in the curcuminoid biosynthesis. Has no activity with cinnamoyl-CoA. This is Phenylpropanoylacetyl-CoA synthase (DCS) from Curcuma longa (Turmeric).